Reading from the N-terminus, the 309-residue chain is Oxygen-dependent coproporphyrinogen-III oxidase (309 aa).

Serine 94 provides a ligand contact to substrate. A divalent metal cation contacts are provided by histidine 98 and histidine 108. Histidine 108 functions as the Proton donor in the catalytic mechanism. 110–112 (NVR) contacts substrate. Residues histidine 147 and histidine 177 each contribute to the a divalent metal cation site. Residues 242–277 (YVEFNLVWDRGTLFGLQTGGRTESILMSLPPLVRWE) are important for dimerization. Residue 260–262 (GGR) coordinates substrate.

Belongs to the aerobic coproporphyrinogen-III oxidase family. In terms of assembly, homodimer. A divalent metal cation is required as a cofactor.

Its subcellular location is the cytoplasm. It catalyses the reaction coproporphyrinogen III + O2 + 2 H(+) = protoporphyrinogen IX + 2 CO2 + 2 H2O. It participates in porphyrin-containing compound metabolism; protoporphyrin-IX biosynthesis; protoporphyrinogen-IX from coproporphyrinogen-III (O2 route): step 1/1. Involved in the heme biosynthesis. Catalyzes the aerobic oxidative decarboxylation of propionate groups of rings A and B of coproporphyrinogen-III to yield the vinyl groups in protoporphyrinogen-IX. The sequence is that of Oxygen-dependent coproporphyrinogen-III oxidase from Yersinia pseudotuberculosis serotype O:1b (strain IP 31758).